The chain runs to 171 residues: Large ribosomal subunit protein uL10 (171 aa).

It belongs to the universal ribosomal protein uL10 family. Part of the ribosomal stalk of the 50S ribosomal subunit. The N-terminus interacts with L11 and the large rRNA to form the base of the stalk. The C-terminus forms an elongated spine to which L12 dimers bind in a sequential fashion forming a multimeric L10(L12)X complex.

Forms part of the ribosomal stalk, playing a central role in the interaction of the ribosome with GTP-bound translation factors. This chain is Large ribosomal subunit protein uL10, found in Corynebacterium efficiens (strain DSM 44549 / YS-314 / AJ 12310 / JCM 11189 / NBRC 100395).